The chain runs to 271 residues: 4-diphosphocytidyl-2-C-methyl-D-erythritol kinase (271 aa).

Lys17 is an active-site residue. ATP is bound at residue 97 to 107; it reads PVGSGLGGGSS. Asp137 is a catalytic residue.

Belongs to the GHMP kinase family. IspE subfamily.

The enzyme catalyses 4-CDP-2-C-methyl-D-erythritol + ATP = 4-CDP-2-C-methyl-D-erythritol 2-phosphate + ADP + H(+). It functions in the pathway isoprenoid biosynthesis; isopentenyl diphosphate biosynthesis via DXP pathway; isopentenyl diphosphate from 1-deoxy-D-xylulose 5-phosphate: step 3/6. Catalyzes the phosphorylation of the position 2 hydroxy group of 4-diphosphocytidyl-2C-methyl-D-erythritol. The sequence is that of 4-diphosphocytidyl-2-C-methyl-D-erythritol kinase from Thermotoga petrophila (strain ATCC BAA-488 / DSM 13995 / JCM 10881 / RKU-1).